The sequence spans 1117 residues: MFGGELDDAFGVFEGKVPKSLKEESKNSQNSQNSQKIKRTLTDKNASNQEQGTKKLESSVGEQESATKRAKIENLKDNQDLIPNNDVNGIHINNSAVADTKHKPKIGDIAADDISNEVSIKNEGDTIPEATVADSFEQEASLQVAGKVGMTEAKSSTEEVVELRHQVRHQVSIPPNYDYVPISKHKSPIPPARTYPFTLDPFQAVSIACIERQESVLVSAHTSAGKTVVAEYAVAQSLRDKQRVIYTSPIKALSNQKYRELLAEFGDVGLMTGDVTINPDATCLVMTTEILRSMLYRGSEVMREVAWVIFDEIHYMRDKERGVVWEETIILLPDKSHFVFLSATIPNAMQFAEWITKIHRQPCHVVYTDFRPTPLQHYLFPSGSDGIHLVVDEKSNFREENFQRAMSALMEKQGDDPAAMATKGNAKKGKTGKGGVKGPSDIYKIVKMIMVKNYNPVIVFSFSKRECEALALQMSKLDMNDQTERDLVTTIFNNAVNQLSEKDRELPQIEHILPLLRRGIGIHHSGLLPILKEVIEILFQEGLLKVLFATETFSIGLNMPAKTVVFTNVRKFDGKTFRWISGGEYIQMSGRAGRRGLDDRGIVILMIDEKMDPPVAKSMLKGEADRLDSAFHLSYNMILNLLRVEGISPEFMLERCFFQFQNSLEVPKLEAKLEESQQHYDSFTILDERPLEEYHTLKTQLERYRTDVRTVVNHPNFCLSFLQGGRLVRVKVGNEDFDWGVVVNVSKRPLPKGQSNEYLPQESYIVHTLVMVASDTGPLRIRSGHLPEVHPPAAEDKGKFEVVPFLLSSLDGIAHIRVFLPNDLKSQGQKLTVGKALSEVKRRFPEGITLLDPVENMNIKEPTFIKLMKKVNILESRLLSNPLHNFSELEEKYAEYLRKLALLEEVKDLKKKLSKARSIMQLDELNSRKRVLRRLGFTTSDDVIEVKGRVACEISSGDGLLLTELIFNGMFNDLTPEQCAALLSCLVFQEKSEVENQRMKEELAGPLKILQEMARRIAKVSKESKQELNEEEYVNSFKPSLMEVVYAWAHGASFAQICKMTDVYEGSLIRMFRRLEELIRQMVDAAKVIGNTSLQQKMEDTIACIHRDIVFSASLYL.

The disordered stretch occupies residues 19–86 (KSLKEESKNS…DNQDLIPNND (68 aa)). Positions 65–79 (SATKRAKIENLKDNQ) are enriched in basic and acidic residues. The region spanning 207-363 (IACIERQESV…WITKIHRQPC (157 aa)) is the Helicase ATP-binding domain. 220–227 (AHTSAGKT) provides a ligand contact to ATP. The short motif at 311–314 (DEIH) is the DEIH box element. Residues 414–433 (GDDPAAMATKGNAKKGKTGK) are disordered. The 202-residue stretch at 441–642 (DIYKIVKMIM…LSYNMILNLL (202 aa)) folds into the Helicase C-terminal domain.

This sequence belongs to the helicase family. SKI2 subfamily. As to quaternary structure, component of the TRAMP complex composed of at least cid14, mtr4, and air1.

The protein localises to the nucleus. In terms of biological role, component of the TRAMP complex which has a poly(A) RNA polymerase activity and is involved in a post-transcriptional quality control mechanism limiting inappropriate expression of genetic information. Polyadenylation is required for the degradative activity of the exosome on several of its nuclear RNA substrates. Required for heterochromatic gene silencing at centromeric repeats by either exosome- or RNAi-mediated degradation of heterochromatic transcripts. The sequence is that of ATP-dependent RNA helicase mtr4 (mtr4) from Schizosaccharomyces pombe (strain 972 / ATCC 24843) (Fission yeast).